The sequence spans 446 residues: Citrate/sodium symporter (446 aa).

5 helical membrane passes run 23–43, 46–66, 79–99, 110–130, and 148–168; these read IFGM…LSHF, AIPT…AIFG, IGGA…AGIF, VMDK…GAIL, and ILAG…CFGI. Na(+) contacts are provided by Ile181 and Gly183. The citrate site is built by Asn186 and Gly187. 5 helical membrane-spanning segments follow: residues 213–233, 267–287, 289–309, 335–355, and 364–384; these read IAIL…LDMI, ETAV…VVAK, ILPS…LIVA, QLLW…QEII, and VIAA…GWLI. 2 residues coordinate Na(+): Met399 and Asn401. Citrate contacts are provided by Arg402, Gly404, Ser405, and Arg428. The chain crosses the membrane as a helical span at residues 425–445; it reads ISSRLGGGIVLVIASIVFSMM.

The protein belongs to the 2-hydroxycarboxylate transporter (2-HCT) (TC 2.A.24) family. As to quaternary structure, homodimer.

The protein localises to the cell inner membrane. The catalysed reaction is citrate(out) + 2 Na(+)(out) = citrate(in) + 2 Na(+)(in). Secondary active transporter that catalyzes the uptake of citrate across the membrane with the concomitant uptake of sodium. Is specific for citrate. The chain is Citrate/sodium symporter from Salmonella dublin.